A 160-amino-acid chain; its full sequence is Ureidoglycolate lyase (160 aa).

This sequence belongs to the ureidoglycolate lyase family. In terms of assembly, homodimer. Requires Ni(2+) as cofactor.

The enzyme catalyses (S)-ureidoglycolate = urea + glyoxylate. It participates in nitrogen metabolism; (S)-allantoin degradation. In terms of biological role, catalyzes the catabolism of the allantoin degradation intermediate (S)-ureidoglycolate, generating urea and glyoxylate. Involved in the utilization of allantoin as nitrogen source. The sequence is that of Ureidoglycolate lyase from Salmonella gallinarum (strain 287/91 / NCTC 13346).